A 351-amino-acid polypeptide reads, in one-letter code: Rhodopsin (351 aa).

The Extracellular portion of the chain corresponds to 1–36; it reads MNGTEGPFFYIPMSNATGLVRSPYDYPQYYLVPPWG. 2 N-linked (GlcNAc...) asparagine glycosylation sites follow: Asn2 and Asn15. The helical transmembrane segment at 37–61 threads the bilayer; the sequence is YACLAAYMFLLILTGFPVNFLTLYV. Topologically, residues 62-73 are cytoplasmic; sequence TIEHKKLRSPLN. A helical transmembrane segment spans residues 74-96; that stretch reads YILLNLAVADLFMVIGGFTTTMW. Residues 97–110 lie on the Extracellular side of the membrane; the sequence is TSLNGYFVFGRMGC. A disulfide bond links Cys110 and Cys187. A helical transmembrane segment spans residues 111–133; it reads NIEGFFATLGGEIALWSLVVLSM. The short motif at 134–136 is the 'Ionic lock' involved in activated form stabilization element; that stretch reads ERW. The Cytoplasmic portion of the chain corresponds to 134–152; sequence ERWIVVCKPISNFRFGENH. The chain crosses the membrane as a helical span at residues 153–173; it reads AVMGVAFSWFMAAACAVPPLV. The Extracellular segment spans residues 174-202; the sequence is GWSRYIPEGMQCSCGIDYYTRAEGFNNES. Asn200 carries an N-linked (GlcNAc...) asparagine glycan. A helical transmembrane segment spans residues 203–224; it reads FVIYMFVVHFTCPLTIITFCYG. Over 225-252 the chain is Cytoplasmic; that stretch reads RLVCTVKEAAAQQQESETTQRAEREVTR. Residues 253 to 274 form a helical membrane-spanning segment; that stretch reads MVIIMFVAFLACWVPYASVAWY. Residues 275 to 286 lie on the Extracellular side of the membrane; that stretch reads IFTHQGSEFGPV. Residues 287–308 form a helical membrane-spanning segment; sequence FMTIPAFFAKSSAVYNPVIYIC. Lys296 carries the post-translational modification N6-(retinylidene)lysine. Residues 309-351 are Cytoplasmic-facing; that stretch reads LNKQFRHCMITTLCCGKNPFEEEEGSTTASKTEASSVCSVSPA. Residues Cys322 and Cys323 are each lipidated (S-palmitoyl cysteine). The tract at residues 330–351 is disordered; that stretch reads EEEGSTTASKTEASSVCSVSPA. The span at 334–351 shows a compositional bias: polar residues; that stretch reads STTASKTEASSVCSVSPA.

This sequence belongs to the G-protein coupled receptor 1 family. Opsin subfamily. Post-translationally, phosphorylated on some or all of the serine and threonine residues present in the C-terminal region. In terms of processing, contains one covalently linked retinal chromophore.

The protein localises to the membrane. Its subcellular location is the cell projection. The protein resides in the cilium. It is found in the photoreceptor outer segment. In terms of biological role, photoreceptor required for image-forming vision at low light intensity. While most salt water fish species use retinal as chromophore, most freshwater fish use 3-dehydroretinal, or a mixture of retinal and 3-dehydroretinal. Light-induced isomerization of 11-cis to all-trans retinal triggers a conformational change that activates signaling via G-proteins. Subsequent receptor phosphorylation mediates displacement of the bound G-protein alpha subunit by arrestin and terminates signaling. The chain is Rhodopsin (rho) from Sardina pilchardus (European pilchard).